Consider the following 238-residue polypeptide: Ribonuclease PH (238 aa).

Phosphate contacts are provided by residues arginine 86 and 124 to 126; that span reads GTR.

Belongs to the RNase PH family. As to quaternary structure, homohexameric ring arranged as a trimer of dimers.

It catalyses the reaction tRNA(n+1) + phosphate = tRNA(n) + a ribonucleoside 5'-diphosphate. Its function is as follows. Phosphorolytic 3'-5' exoribonuclease that plays an important role in tRNA 3'-end maturation. Removes nucleotide residues following the 3'-CCA terminus of tRNAs; can also add nucleotides to the ends of RNA molecules by using nucleoside diphosphates as substrates, but this may not be physiologically important. Probably plays a role in initiation of 16S rRNA degradation (leading to ribosome degradation) during starvation. This Proteus mirabilis (strain HI4320) protein is Ribonuclease PH.